We begin with the raw amino-acid sequence, 88 residues long: Small ribosomal subunit protein bS20 (88 aa).

The segment at lysine 69–glycine 88 is disordered. Over residues threonine 71–glycine 88 the composition is skewed to basic residues.

Belongs to the bacterial ribosomal protein bS20 family.

Binds directly to 16S ribosomal RNA. The chain is Small ribosomal subunit protein bS20 from Pelotomaculum thermopropionicum (strain DSM 13744 / JCM 10971 / SI).